Reading from the N-terminus, the 488-residue chain is Phenylalanine--tRNA ligase alpha subunit (488 aa).

L-phenylalanine contacts are provided by residues Thr-315, 354–356 (QLD), Phe-394, and Phe-419.

Belongs to the class-II aminoacyl-tRNA synthetase family. Phe-tRNA synthetase alpha subunit type 2 subfamily. In terms of assembly, tetramer of two alpha and two beta subunits. Requires Mg(2+) as cofactor.

The protein resides in the cytoplasm. The catalysed reaction is tRNA(Phe) + L-phenylalanine + ATP = L-phenylalanyl-tRNA(Phe) + AMP + diphosphate + H(+). In Pyrobaculum calidifontis (strain DSM 21063 / JCM 11548 / VA1), this protein is Phenylalanine--tRNA ligase alpha subunit.